Consider the following 381-residue polypeptide: Dual specificity protein phosphatase 6 (381 aa).

Residues 30-148 form the Rhodanese domain; sequence GNEQLLLMDC…FQAEFALHCE (119 aa). The interval 176–203 is disordered; the sequence is SSSDIESDLDRDPNSATDSDGSPLSNSQ. Positions 189-203 are enriched in polar residues; that stretch reads NSATDSDGSPLSNSQ. The 144-residue stretch at 206 to 349 folds into the Tyrosine-protein phosphatase domain; the sequence is FPVEILPFLY…LLDFERTLGL (144 aa). The Phosphocysteine intermediate role is filled by Cys293.

The protein belongs to the protein-tyrosine phosphatase family. Non-receptor class dual specificity subfamily. Interacts with MAPK1/ERK2. Ubiquitinated by the SCF(FBXO31) complex, leading to its proteasomal degradation. Expressed in lung, heart, brain, and kidney, but not significantly in skeletal muscle or testis.

It is found in the cytoplasm. The catalysed reaction is O-phospho-L-tyrosyl-[protein] + H2O = L-tyrosyl-[protein] + phosphate. It catalyses the reaction O-phospho-L-seryl-[protein] + H2O = L-seryl-[protein] + phosphate. The enzyme catalyses O-phospho-L-threonyl-[protein] + H2O = L-threonyl-[protein] + phosphate. In terms of biological role, dual specificity protein phosphatase, which mediates dephosphorylation and inactivation of MAP kinases. Has a specificity for the ERK family. Implicated in muscle and neuronal differentiation. Plays an important role in alleviating chronic postoperative pain. Necessary for the normal dephosphorylation of the long-lasting phosphorylated forms of spinal MAPK1/3 and MAP kinase p38 induced by peripheral surgery, which drives the resolution of acute postoperative allodynia. Also important for dephosphorylation of MAPK1/3 in local wound tissue, which further contributes to resolution of acute pain. The sequence is that of Dual specificity protein phosphatase 6 (Dusp6) from Rattus norvegicus (Rat).